The chain runs to 388 residues: Chorismate synthase (388 aa).

Residues R39 and R45 each coordinate NADP(+). Positions E95–K118 are disordered. Residues R130 to S132, N251 to A252, G296, K311 to T315, and R337 each bind FMN.

The protein belongs to the chorismate synthase family. As to quaternary structure, homotetramer. FMNH2 serves as cofactor.

It carries out the reaction 5-O-(1-carboxyvinyl)-3-phosphoshikimate = chorismate + phosphate. It functions in the pathway metabolic intermediate biosynthesis; chorismate biosynthesis; chorismate from D-erythrose 4-phosphate and phosphoenolpyruvate: step 7/7. Catalyzes the anti-1,4-elimination of the C-3 phosphate and the C-6 proR hydrogen from 5-enolpyruvylshikimate-3-phosphate (EPSP) to yield chorismate, which is the branch point compound that serves as the starting substrate for the three terminal pathways of aromatic amino acid biosynthesis. This reaction introduces a second double bond into the aromatic ring system. The polypeptide is Chorismate synthase (Listeria monocytogenes serotype 4b (strain F2365)).